The chain runs to 891 residues: Aconitate hydratase A (891 aa).

[4Fe-4S] cluster-binding residues include cysteine 435, cysteine 501, and cysteine 504.

Belongs to the aconitase/IPM isomerase family. Monomer. It depends on [4Fe-4S] cluster as a cofactor.

The enzyme catalyses citrate = D-threo-isocitrate. The catalysed reaction is (2S,3R)-3-hydroxybutane-1,2,3-tricarboxylate = 2-methyl-cis-aconitate + H2O. The protein operates within carbohydrate metabolism; tricarboxylic acid cycle; isocitrate from oxaloacetate: step 2/2. Its pathway is organic acid metabolism; propanoate degradation. In terms of biological role, involved in the catabolism of short chain fatty acids (SCFA) via the tricarboxylic acid (TCA)(acetyl degradation route) and the 2-methylcitrate cycle I (propionate degradation route). Catalyzes the reversible isomerization of citrate to isocitrate via cis-aconitate. Also catalyzes the hydration of 2-methyl-cis-aconitate to yield (2R,3S)-2-methylisocitrate. The (2S,3S)-2-methylcitrate (2-MC) is a very poor substrate. The apo form of AcnA functions as a RNA-binding regulatory protein. The polypeptide is Aconitate hydratase A (acnA) (Salmonella typhimurium (strain LT2 / SGSC1412 / ATCC 700720)).